The chain runs to 417 residues: Gamma-glutamyl phosphate reductase (417 aa).

The protein belongs to the gamma-glutamyl phosphate reductase family.

The protein resides in the cytoplasm. The enzyme catalyses L-glutamate 5-semialdehyde + phosphate + NADP(+) = L-glutamyl 5-phosphate + NADPH + H(+). It functions in the pathway amino-acid biosynthesis; L-proline biosynthesis; L-glutamate 5-semialdehyde from L-glutamate: step 2/2. Its function is as follows. Catalyzes the NADPH-dependent reduction of L-glutamate 5-phosphate into L-glutamate 5-semialdehyde and phosphate. The product spontaneously undergoes cyclization to form 1-pyrroline-5-carboxylate. The polypeptide is Gamma-glutamyl phosphate reductase (Escherichia coli (strain SMS-3-5 / SECEC)).